The chain runs to 591 residues: A-type ATP synthase subunit A (591 aa).

233 to 240 (GPFGSGKT) contributes to the ATP binding site.

Belongs to the ATPase alpha/beta chains family. In terms of assembly, has multiple subunits with at least A(3), B(3), C, D, E, F, H, I and proteolipid K(x).

The protein localises to the cell membrane. It carries out the reaction ATP + H2O + 4 H(+)(in) = ADP + phosphate + 5 H(+)(out). Functionally, component of the A-type ATP synthase that produces ATP from ADP in the presence of a proton gradient across the membrane. The A chain is the catalytic subunit. The polypeptide is A-type ATP synthase subunit A (Metallosphaera sedula (strain ATCC 51363 / DSM 5348 / JCM 9185 / NBRC 15509 / TH2)).